The sequence spans 159 residues: Cytochrome c nitrite reductase subunit NrfH (159 aa).

Residues 2–14 (SEEKSRNGPARLK) are Cytoplasmic-facing. Residues 15–33 (LVLGGATLGVVALATVAFG) form a helical; Signal-anchor for type II membrane protein membrane-spanning segment. At 34–159 (MKYTDQRPFC…PISTREVADE (126 aa)) the chain is on the periplasmic side. Cysteine 43, cysteine 46, methionine 49, histidine 61, and cysteine 66 together coordinate heme. Asparagine 67 is a binding site for a menaquinol. The heme site is built by cysteine 69 and histidine 70. 2 residues coordinate a menaquinol: lysine 82 and aspartate 89. Aspartate 89 is a binding site for heme. Residues 99–100 (GD) form an interaction with NrfA region. Heme is bound by residues cysteine 116, cysteine 119, histidine 120, cysteine 136, cysteine 139, histidine 140, and histidine 145. The segment at 123–158 (TNVEVASMEAKKYCTDCHRNVQHMRMKPISTREVAD) is interaction with NrfA.

Belongs to the NapC/NirT/NrfH family. As to quaternary structure, component of the NrfHA cytochrome c nitrite reductase complex composed of 4 NrfA catalytic subunits and 2 NrfH quinone-binding subunits. Interacts with NrfA homodimer. Requires heme as cofactor.

The protein resides in the cell inner membrane. Its function is as follows. Electron donor subunit of the cytochrome c nitrite reductase holocomplex NrfHA. Acquires electrons from the menaquinone pool and mediates their transfer to the catalytic subunit NrfA in an anaerobic respiratory process of nitrite. The other biological function of the NrfHA holocomplex is to detoxify nitrite. This function is essential for the survival of this organism as it enables it to overcome inhibition by nitrite, which is produced by other organisms living in the same environment. The sequence is that of Cytochrome c nitrite reductase subunit NrfH from Nitratidesulfovibrio vulgaris (strain ATCC 29579 / DSM 644 / CCUG 34227 / NCIMB 8303 / VKM B-1760 / Hildenborough) (Desulfovibrio vulgaris).